A 283-amino-acid chain; its full sequence is Splicing factor U2af small subunit B (283 aa).

The C3H1-type 1 zinc finger occupies 12–40 (EKDRVNCPFYFKIGACRHGDRCSRLHNRP). Residues 44–146 (PTLLLSNMYQ…RPIIADFSPV (103 aa)) enclose the RRM domain. The C3H1-type 2 zinc-finger motif lies at 148–175 (DFREATCRQYEENSCNRGGYCNFMHVKQ). Basic residues predominate over residues 191-210 (SYRRGSRSRSRSISPRRKRE). The tract at residues 191–283 (SYRRGSRSRS…QWNRERDEGV (93 aa)) is disordered. Over residues 211 to 245 (HSRERERGDVRDRDRHGNGKRSSDRSERHDRDGGG) the composition is skewed to basic and acidic residues. A compositionally biased stretch (basic residues) spans 246-259 (RRRHGSPKRSRSPR). Basic and acidic residues predominate over residues 260–283 (NVREGSEERRARIEQWNRERDEGV).

This sequence belongs to the splicing factor SR family. In terms of assembly, component of the spliceosome. Homo- and heterodimer. Interacts with RNU1, U2AF35A and SR45.

The protein resides in the nucleus speckle. In terms of biological role, necessary for the splicing of pre-mRNA. Probably active at the 3' splice sites. The polypeptide is Splicing factor U2af small subunit B (U2AF35B) (Arabidopsis thaliana (Mouse-ear cress)).